The chain runs to 146 residues: Leghemoglobin Lb120-1 (146 aa).

Positions 2 to 146 (GFTEKQEALV…LASAIKKAMN (145 aa)) constitute a Globin domain. Nitrated tyrosine is present on residues tyrosine 24 and tyrosine 29. Position 44 (serine 44) interacts with heme b. Serine 44 carries the phosphoserine modification. Histidine 61 is a binding site for O2. 3 residues coordinate heme b: lysine 64, histidine 93, and lysine 96. At tyrosine 134 the chain carries Nitrated tyrosine.

Belongs to the plant globin family. Monomer. Post-translationally, nitrated in effective nodules and particularly in hypoxic conditions; this mechanism may play a protective role in the symbiosis by buffering toxic peroxynitrite NO(2)(-). Nitration level decrease during nodule senescence. In terms of processing, phosphorylation at Ser-44 disrupts the molecular environment of its porphyrin ring oxygen binding pocket, thus leading to a reduced oxygen consumption and to the delivery of oxygen O(2) to symbiosomes. In terms of tissue distribution, root nodules.

It is found in the cytoplasm. The protein localises to the cytosol. The protein resides in the nucleus. In terms of biological role, leghemoglobin that reversibly binds oxygen O(2) through a pentacoordinated heme iron. In root nodules, facilitates the diffusion of oxygen to the bacteroids while preventing the bacterial nitrogenase from being inactivated by buffering dioxygen, nitric oxide and carbon monoxide, and promoting the formation of reactive oxygen species (ROS, e.g. H(2)O(2)). This role is essential for symbiotic nitrogen fixation (SNF). This is Leghemoglobin Lb120-1 from Pisum sativum (Garden pea).